The sequence spans 184 residues: Muscle-specific protein 20 (184 aa).

The Calponin-homology (CH) domain maps to Pro-17–Thr-122. The stretch at Val-157–Leu-181 is one Calponin-like repeat.

This sequence belongs to the calponin family. In terms of tissue distribution, found in synchronous muscle; not found in asynchronous indirect flight muscle.

This Drosophila melanogaster (Fruit fly) protein is Muscle-specific protein 20 (Mp20).